The primary structure comprises 443 residues: ATP-dependent protease ATPase subunit HslU (443 aa).

ATP contacts are provided by residues Ile18, 60 to 65 (GVGKTE), Asp256, Glu321, and Arg393.

The protein belongs to the ClpX chaperone family. HslU subfamily. As to quaternary structure, a double ring-shaped homohexamer of HslV is capped on each side by a ring-shaped HslU homohexamer. The assembly of the HslU/HslV complex is dependent on binding of ATP.

It localises to the cytoplasm. Its function is as follows. ATPase subunit of a proteasome-like degradation complex; this subunit has chaperone activity. The binding of ATP and its subsequent hydrolysis by HslU are essential for unfolding of protein substrates subsequently hydrolyzed by HslV. HslU recognizes the N-terminal part of its protein substrates and unfolds these before they are guided to HslV for hydrolysis. This is ATP-dependent protease ATPase subunit HslU from Buchnera aphidicola subsp. Acyrthosiphon pisum (strain 5A).